The chain runs to 32 residues: uncharacterized protein (32 aa).

This is an uncharacterized protein from Haemophilus influenzae (strain ATCC 51907 / DSM 11121 / KW20 / Rd).